The chain runs to 133 residues: Ubiquitin-like FUBI-ribosomal protein eS30 fusion protein (133 aa).

The Ubiquitin-like domain maps to 1–74; the sequence is MQLFVRAQEL…LEVAGRMLGG (74 aa). The residue at position 125 (Lys-125) is an N6-succinyllysine.

This sequence in the N-terminal section; belongs to the ubiquitin family. It in the C-terminal section; belongs to the eukaryotic ribosomal protein eS30 family. In terms of assembly, component of the 40S subunit of the ribosome. In terms of processing, FUBI is cleaved from ribosomal protein S30 by the deubiquitinase USP36 before the assembly of ribosomal protein S30 into pre-40S ribosomal particles. FUBI removal from ribosomal protein S30 is a crucial event for the final maturation of pre-40S particles.

Its subcellular location is the cytoplasm. It localises to the nucleus. Its function is as follows. May have pro-apoptotic activity. Functionally, component of the 40S subunit of the ribosome. Contributes to the assembly and function of 40S ribosomal subunits. This chain is Ubiquitin-like FUBI-ribosomal protein eS30 fusion protein (FAU), found in Oryctolagus cuniculus (Rabbit).